Here is a 343-residue protein sequence, read N- to C-terminus: Glycerol-3-phosphate dehydrogenase [NAD(P)+] (343 aa).

Ser-22, Tyr-23, His-43, and Lys-117 together coordinate NADPH. 3 residues coordinate sn-glycerol 3-phosphate: Lys-117, Gly-146, and Thr-148. Residue Ala-150 coordinates NADPH. Sn-glycerol 3-phosphate contacts are provided by Lys-202, Asp-255, Ser-265, Arg-266, and Asn-267. The Proton acceptor role is filled by Lys-202. Arg-266 lines the NADPH pocket. NADPH is bound by residues Val-290 and Glu-292.

Belongs to the NAD-dependent glycerol-3-phosphate dehydrogenase family.

The protein localises to the cytoplasm. The catalysed reaction is sn-glycerol 3-phosphate + NAD(+) = dihydroxyacetone phosphate + NADH + H(+). The enzyme catalyses sn-glycerol 3-phosphate + NADP(+) = dihydroxyacetone phosphate + NADPH + H(+). Its pathway is membrane lipid metabolism; glycerophospholipid metabolism. Its function is as follows. Catalyzes the reduction of the glycolytic intermediate dihydroxyacetone phosphate (DHAP) to sn-glycerol 3-phosphate (G3P), the key precursor for phospholipid synthesis. The protein is Glycerol-3-phosphate dehydrogenase [NAD(P)+] of Aliivibrio fischeri (strain ATCC 700601 / ES114) (Vibrio fischeri).